A 194-amino-acid chain; its full sequence is UPF0215 protein Mbar_A0619 (194 aa).

Belongs to the UPF0215 family.

This Methanosarcina barkeri (strain Fusaro / DSM 804) protein is UPF0215 protein Mbar_A0619.